The following is a 258-amino-acid chain: uncharacterized protein (258 aa).

N-linked (GlcNAc...) asparagine; by host glycans are attached at residues N60, N104, and N113. The segment covering 147 to 156 (TTRKPGQKTT) has biased composition (low complexity). The disordered stretch occupies residues 147-183 (TTRKPGQKTTLSRLKTTPNKHTQHKRSTRRTSPRDYN). Residues 157 to 166 (LSRLKTTPNK) are compositionally biased toward polar residues. A compositionally biased stretch (basic residues) spans 167–177 (HTQHKRSTRRT). N183 carries N-linked (GlcNAc...) asparagine; by host glycosylation. The chain crosses the membrane as a helical span at residues 208 to 228 (AHSAWILIVIIIIIVVILFFF).

Belongs to the RL11 family.

The protein localises to the membrane. This is an uncharacterized protein from Human cytomegalovirus (strain AD169) (HHV-5).